Consider the following 405-residue polypeptide: L-carnitine CoA-transferase (405 aa).

Lys-97 and Arg-104 together coordinate CoA. Catalysis depends on Asp-169, which acts as the Nucleophile.

The protein belongs to the CoA-transferase III family. CaiB subfamily. In terms of assembly, homodimer.

The protein resides in the cytoplasm. It catalyses the reaction crotonobetainyl-CoA + (R)-carnitine = crotonobetaine + (R)-carnitinyl-CoA. It carries out the reaction 4-(trimethylamino)butanoyl-CoA + (R)-carnitine = (R)-carnitinyl-CoA + 4-(trimethylamino)butanoate. It functions in the pathway amine and polyamine metabolism; carnitine metabolism. Functionally, catalyzes the reversible transfer of the CoA moiety from gamma-butyrobetainyl-CoA to L-carnitine to generate L-carnitinyl-CoA and gamma-butyrobetaine. Is also able to catalyze the reversible transfer of the CoA moiety from gamma-butyrobetainyl-CoA or L-carnitinyl-CoA to crotonobetaine to generate crotonobetainyl-CoA. The polypeptide is L-carnitine CoA-transferase (Escherichia coli O127:H6 (strain E2348/69 / EPEC)).